The following is a 508-amino-acid chain: Steroid 17-alpha-hydroxylase/17,20 lyase (508 aa).

A heme-binding site is contributed by Cys445.

The protein belongs to the cytochrome P450 family. Requires heme as cofactor.

Its subcellular location is the membrane. The catalysed reaction is a C21-steroid + reduced [NADPH--hemoprotein reductase] + O2 = a 17alpha-hydroxy-C21-steroid + oxidized [NADPH--hemoprotein reductase] + H2O + H(+). The enzyme catalyses 17alpha-hydroxyprogesterone + reduced [NADPH--hemoprotein reductase] + O2 = androst-4-ene-3,17-dione + acetate + oxidized [NADPH--hemoprotein reductase] + H2O + 2 H(+). It carries out the reaction 17alpha-hydroxypregnenolone + reduced [NADPH--hemoprotein reductase] + O2 = 3beta-hydroxyandrost-5-en-17-one + acetate + oxidized [NADPH--hemoprotein reductase] + H2O + 2 H(+). It functions in the pathway lipid metabolism; steroid biosynthesis. In terms of biological role, conversion of pregnenolone and progesterone to their 17-alpha-hydroxylated products and subsequently to dehydroepiandrosterone (DHEA) and androstenedione. Catalyzes both the 17-alpha-hydroxylation and the 17,20-lyase reaction. The polypeptide is Steroid 17-alpha-hydroxylase/17,20 lyase (CYP17A1) (Gallus gallus (Chicken)).